The following is a 597-amino-acid chain: Gamma-terpinene synthase, chloroplastic (597 aa).

The transit peptide at 1 to 47 (MATLSMQVSILSKQVKNLNSFGMRASKLPMVARRVDVSTTRLRPICS) directs the protein to the chloroplast. Positions 350 and 354 each coordinate Mn(2+). The short motif at 350–354 (DDVYD) is the DDXXD motif element. 2 homodimerization regions span residues 356-362 (YGTLDEL) and 428-464 (EAKW…YFTL). Residues aspartate 494 and glutamate 502 each coordinate Mn(2+).

This sequence belongs to the terpene synthase family. Homodimer. Requires Mn(2+) as cofactor. The cofactor is Mg(2+).

The protein resides in the plastid. It localises to the chloroplast. It catalyses the reaction (2E)-geranyl diphosphate = gamma-terpinene + diphosphate. It participates in secondary metabolite biosynthesis; terpenoid biosynthesis. Its function is as follows. Involved in the biosynthesis of phenolic monoterpenes natural products thymol and carvacrol which have a broad range of biological activities acting as antimicrobial compounds, insecticides, antioxidants and pharmaceutical agents. Monoterpene synthase which catalyzes the conversion of geranyl diphosphate (GPP) to gamma-terpinene. This is Gamma-terpinene synthase, chloroplastic from Thymus caespititius (Cretan thyme).